Reading from the N-terminus, the 546-residue chain is Methionine--tRNA ligase (546 aa).

Residues 15–25 (PYANGPIHLGH) carry the 'HIGH' region motif. Residues cysteine 146, cysteine 149, cysteine 159, and cysteine 162 each coordinate Zn(2+). The 'KMSKS' region motif lies at 332 to 336 (KMSKS). ATP is bound at residue lysine 335.

Belongs to the class-I aminoacyl-tRNA synthetase family. MetG type 1 subfamily. In terms of assembly, monomer. It depends on Zn(2+) as a cofactor.

The protein resides in the cytoplasm. It catalyses the reaction tRNA(Met) + L-methionine + ATP = L-methionyl-tRNA(Met) + AMP + diphosphate. In terms of biological role, is required not only for elongation of protein synthesis but also for the initiation of all mRNA translation through initiator tRNA(fMet) aminoacylation. This Coxiella burnetii (strain Dugway 5J108-111) protein is Methionine--tRNA ligase.